The primary structure comprises 75 residues: uncharacterized protein (75 aa).

This is an uncharacterized protein from Escherichia coli (strain K12).